A 1543-amino-acid chain; its full sequence is DNA-directed RNA polymerase subunit beta' (1543 aa).

Positions 60, 62, 75, and 78 each coordinate Zn(2+). Aspartate 627, aspartate 629, and aspartate 631 together coordinate Mg(2+). Positions 1017, 1097, 1104, and 1107 each coordinate Zn(2+). Disordered stretches follow at residues 1466-1490 (PADR…APPR) and 1522-1543 (AEEG…EENV).

Belongs to the RNA polymerase beta' chain family. The RNAP catalytic core consists of 2 alpha, 1 beta, 1 beta' and 1 omega subunit. When a sigma factor is associated with the core the holoenzyme is formed, which can initiate transcription. Mg(2+) serves as cofactor. Zn(2+) is required as a cofactor.

It catalyses the reaction RNA(n) + a ribonucleoside 5'-triphosphate = RNA(n+1) + diphosphate. Its function is as follows. DNA-dependent RNA polymerase catalyzes the transcription of DNA into RNA using the four ribonucleoside triphosphates as substrates. The chain is DNA-directed RNA polymerase subunit beta' from Herpetosiphon aurantiacus (strain ATCC 23779 / DSM 785 / 114-95).